The primary structure comprises 224 residues: Lipoprotein-releasing system ATP-binding protein LolD (224 aa).

The 219-residue stretch at 6 to 224 (VRLRELRRSF…VVRLHEGVLE (219 aa)) folds into the ABC transporter domain. Position 42–49 (42–49 (GPSGSGKS)) interacts with ATP.

The protein belongs to the ABC transporter superfamily. Lipoprotein translocase (TC 3.A.1.125) family. In terms of assembly, the complex is composed of two ATP-binding proteins (LolD) and two transmembrane proteins (LolC and LolE).

It is found in the cell inner membrane. In terms of biological role, part of the ABC transporter complex LolCDE involved in the translocation of mature outer membrane-directed lipoproteins, from the inner membrane to the periplasmic chaperone, LolA. Responsible for the formation of the LolA-lipoprotein complex in an ATP-dependent manner. The protein is Lipoprotein-releasing system ATP-binding protein LolD of Novosphingobium aromaticivorans (strain ATCC 700278 / DSM 12444 / CCUG 56034 / CIP 105152 / NBRC 16084 / F199).